The primary structure comprises 211 residues: Protein-methionine-sulfoxide reductase heme-binding subunit MsrQ (211 aa).

Transmembrane regions (helical) follow at residues 10–30 (WLKV…VWAI), 54–74 (FLLA…PLLI), 82–102 (LWCF…ELGV), 116–136 (PYLT…FTST), 153–173 (FVYL…KIIS), and 178–198 (IYAG…LSLF).

This sequence belongs to the MsrQ family. In terms of assembly, heterodimer of a catalytic subunit (MsrP) and a heme-binding subunit (MsrQ). It depends on FMN as a cofactor. Requires heme b as cofactor.

It is found in the cell inner membrane. Part of the MsrPQ system that repairs oxidized periplasmic proteins containing methionine sulfoxide residues (Met-O), using respiratory chain electrons. Thus protects these proteins from oxidative-stress damage caused by reactive species of oxygen and chlorine generated by the host defense mechanisms. MsrPQ is essential for the maintenance of envelope integrity under bleach stress, rescuing a wide series of structurally unrelated periplasmic proteins from methionine oxidation, including the primary periplasmic chaperone SurA and the lipoprotein Pal. MsrQ provides electrons for reduction to the reductase catalytic subunit MsrP, using the quinone pool of the respiratory chain. The polypeptide is Protein-methionine-sulfoxide reductase heme-binding subunit MsrQ (Escherichia coli O6:H1 (strain CFT073 / ATCC 700928 / UPEC)).